We begin with the raw amino-acid sequence, 149 residues long: NADH-ubiquinone oxidoreductase chain 6 (149 aa).

The next 4 membrane-spanning stretches (helical) occupy residues 23-43 (ILML…FYFI), 51-71 (MMMI…MISL), 83-103 (LSVT…MTKL), and 114-134 (VNFV…LTII).

Belongs to the complex I subunit 6 family.

Its subcellular location is the mitochondrion membrane. The catalysed reaction is a ubiquinone + NADH + 5 H(+)(in) = a ubiquinol + NAD(+) + 4 H(+)(out). Core subunit of the mitochondrial membrane respiratory chain NADH dehydrogenase (Complex I) that is believed to belong to the minimal assembly required for catalysis. Complex I functions in the transfer of electrons from NADH to the respiratory chain. The immediate electron acceptor for the enzyme is believed to be ubiquinone. The protein is NADH-ubiquinone oxidoreductase chain 6 (ND6) of Rhipicephalus sanguineus (Brown dog tick).